A 306-amino-acid chain; its full sequence is Olfactory receptor 8G17 (306 aa).

At 1–28 the chain is on the extracellular side; sequence MEKGNQSTVNKFFLSGLTEQPELQLPLF. N-linked (GlcNAc...) asparagine glycosylation is present at asparagine 5. The chain crosses the membrane as a helical span at residues 29–49; that stretch reads LLFLGIYLLTVLGNLGMIILI. The Cytoplasmic portion of the chain corresponds to 50-56; it reads LLSSYLH. The chain crosses the membrane as a helical span at residues 57 to 77; sequence TPMYFFLSSLSFIDFCQSTVI. The Extracellular segment spans residues 78 to 97; that stretch reads TPKMLVKFVREKNEISYPEC. A helical transmembrane segment spans residues 98-118; the sequence is ITQLCFFVIFAVSESYMLAAM. Residues 119 to 143 are Cytoplasmic-facing; the sequence is AYDRYVAICSPLLYSSIMSQHKCLS. A helical membrane pass occupies residues 144–164; the sequence is LVLGVYILGIVCASAHVGCIF. The Extracellular segment spans residues 165–196; the sequence is RIDFCKSDLINHYFCDLISILNLSCSNIFVND. The chain crosses the membrane as a helical span at residues 197–217; the sequence is LVILIFSLINTIFPTLTILSS. Residues 218–236 lie on the Cytoplasmic side of the membrane; that stretch reads YAFIIISILRIKSTEGRSK. Residues 237–257 form a helical membrane-spanning segment; that stretch reads AFSTCSSHISAVAIFYISAGF. The Extracellular portion of the chain corresponds to 258 to 271; sequence TYLNPSSSHSMDEG. A helical transmembrane segment spans residues 272 to 292; that stretch reads KVSSIFYTIIVPMLNPLIYSL. At 293–306 the chain is on the cytoplasmic side; it reads RNKDVKIALKKMIE.

The protein belongs to the G-protein coupled receptor 1 family.

It localises to the cell membrane. Its function is as follows. Odorant receptor. The chain is Olfactory receptor 8G17 from Mus musculus (Mouse).